We begin with the raw amino-acid sequence, 162 residues long: Shikimate kinase (162 aa).

11 to 16 (GSGKSS) provides a ligand contact to ATP. Ser15 is a binding site for Mg(2+). The substrate site is built by Asp33, Arg57, and Gly80. Residue Arg116 coordinates ATP. Arg132 provides a ligand contact to substrate.

This sequence belongs to the shikimate kinase family. As to quaternary structure, monomer. Mg(2+) serves as cofactor.

The protein localises to the cytoplasm. It carries out the reaction shikimate + ATP = 3-phosphoshikimate + ADP + H(+). Its pathway is metabolic intermediate biosynthesis; chorismate biosynthesis; chorismate from D-erythrose 4-phosphate and phosphoenolpyruvate: step 5/7. Functionally, catalyzes the specific phosphorylation of the 3-hydroxyl group of shikimic acid using ATP as a cosubstrate. The polypeptide is Shikimate kinase (Helicobacter pylori (strain Shi470)).